A 293-amino-acid chain; its full sequence is Undecaprenyl-diphosphatase (293 aa).

Helical transmembrane passes span 3-23, 43-63, 85-105, 109-129, 178-198, 203-223, 238-258, and 269-289; these read IALA…EFLP, KGKI…CWEF, VNVI…GKWI, LFNP…ILLA, FALV…MLFG, VATE…TVYE, IFAV…RWLL, and FAWY…TGVI.

The protein belongs to the UppP family.

Its subcellular location is the cell inner membrane. It catalyses the reaction di-trans,octa-cis-undecaprenyl diphosphate + H2O = di-trans,octa-cis-undecaprenyl phosphate + phosphate + H(+). In terms of biological role, catalyzes the dephosphorylation of undecaprenyl diphosphate (UPP). Confers resistance to bacitracin. This is Undecaprenyl-diphosphatase from Cupriavidus metallidurans (strain ATCC 43123 / DSM 2839 / NBRC 102507 / CH34) (Ralstonia metallidurans).